The primary structure comprises 502 residues: Mitochondrial fusion and transport protein UGO1 (502 aa).

Methionine 1 is subject to N-acetylmethionine. The Cytoplasmic segment spans residues 1-293 (MNNNNVTEAT…VINSPDISKS (293 aa)). Residues 1 to 294 (MNNNNVTEAT…INSPDISKSF (294 aa)) are binds FZO1. One copy of the Solcar repeat lies at 288-383 (PDISKSFILA…NSFFNKLFDL (96 aa)). A helical; Signal-anchor for type II membrane protein transmembrane segment spans residues 294–314 (FILALGAGVFTSIILLPVDLI). The binds MGM1 stretch occupies residues 312–502 (DLIRTRLIVT…VDINMEQEKF (191 aa)). Residues 315–502 (RTRLIVTSFK…VDINMEQEKF (188 aa)) lie on the Mitochondrial intermembrane side of the membrane.

In terms of assembly, interacts with FZO1 through its cytoplasmic domain and with MGM1 through its mitochondrial intermembrane space domain.

Its subcellular location is the mitochondrion outer membrane. Its function is as follows. Required for mitochondrial fusion as well as normal mitochondrial morphology by bridging the essential interaction between FZO1 and MGM1. May coordinate fusion of inner and outer membranes during mitochondrial fusion. The protein is Mitochondrial fusion and transport protein UGO1 of Saccharomyces cerevisiae (strain ATCC 204508 / S288c) (Baker's yeast).